Consider the following 140-residue polypeptide: uncharacterized protein (140 aa).

The VOC domain maps to 4–127 (TLTHLALHVP…AGNYVEFSYG (124 aa)).

This is an uncharacterized protein from Pseudomonas aeruginosa (strain ATCC 15692 / DSM 22644 / CIP 104116 / JCM 14847 / LMG 12228 / 1C / PRS 101 / PAO1).